The sequence spans 32 residues: Protamine-2 (32 aa).

Residues 1-32 (PRRRRSSSRPVRRRRARRVSRRRRRRGGRRRR) are disordered.

In terms of tissue distribution, testis.

It is found in the nucleus. The protein localises to the chromosome. Protamines substitute for histones in the chromatin of sperm during the haploid phase of spermatogenesis. They compact sperm DNA into a highly condensed, stable and inactive complex. The sequence is that of Protamine-2 from Oncorhynchus mykiss (Rainbow trout).